The following is a 242-amino-acid chain: uncharacterized protein (242 aa).

Disordered regions lie at residues 43–70 (SRRS…TSKD) and 112–162 (RMSR…VTPR). Polar residues predominate over residues 58 to 70 (QSVSGRKNSTSKD). 2 stretches are compositionally biased toward low complexity: residues 122-139 (ERAA…AGHA) and 147-162 (ADGA…VTPR).

This is an uncharacterized protein from Homo sapiens (Human).